The sequence spans 188 residues: Elongation factor P-like protein (188 aa).

Belongs to the elongation factor P family.

In Xylella fastidiosa (strain M12), this protein is Elongation factor P-like protein.